The chain runs to 670 residues: Methionine--tRNA ligase (670 aa).

The short motif at 14-24 (PYANGHLHLGH) is the 'HIGH' region element. Zn(2+) is bound by residues cysteine 145, cysteine 148, cysteine 158, and cysteine 161. The 'KMSKS' region signature appears at 330–334 (KMSKS). Position 333 (lysine 333) interacts with ATP. The tRNA-binding domain occupies 570–670 (DFAKVDLRIA…AGALPGMKVK (101 aa)).

This sequence belongs to the class-I aminoacyl-tRNA synthetase family. MetG type 1 subfamily. As to quaternary structure, homodimer. Zn(2+) serves as cofactor.

It localises to the cytoplasm. The catalysed reaction is tRNA(Met) + L-methionine + ATP = L-methionyl-tRNA(Met) + AMP + diphosphate. Functionally, is required not only for elongation of protein synthesis but also for the initiation of all mRNA translation through initiator tRNA(fMet) aminoacylation. The chain is Methionine--tRNA ligase from Legionella pneumophila subsp. pneumophila (strain Philadelphia 1 / ATCC 33152 / DSM 7513).